Here is a 560-residue protein sequence, read N- to C-terminus: uncharacterized protein (560 aa).

Positions 18-44 form a DNA-binding region, zn(2)-C6 fungal-type; it reads CLRCRRRKVKCDRQYPCSRCKESEESC. The disordered stretch occupies residues 60-80; the sequence is LSRPITRETDSSAHQETRTRL. Positions 64 to 80 are enriched in basic and acidic residues; that stretch reads ITRETDSSAHQETRTRL. The helical transmembrane segment at 182–202 threads the bilayer; that stretch reads FATSIILIVTAIAVALSLESF.

It is found in the nucleus membrane. This is an uncharacterized protein from Schizosaccharomyces pombe (strain 972 / ATCC 24843) (Fission yeast).